Here is a 251-residue protein sequence, read N- to C-terminus: Probable aquaporin TIP4-1 (251 aa).

2 helical membrane-spanning segments follow: residues 26–46 (LVLTFVFVFTGVAATMAAGVP) and 57–77 (ALAGVAIATALAAGVLVTAGF). The short motif at 85–87 (NPA) is the NPA 1 element. 3 helical membrane passes run 104-124 (ALYVAAQLLASSLACILLRYL), 144-164 (GLVMEIILTFSLLFVVYATIL), and 170-190 (VPGFGPLLTGLIVGANTIAGG). The NPA 2 motif lies at 198–200 (NPA). A helical transmembrane segment spans residues 219–239 (WLGPLIGGPLAGLVYESLFLV).

The protein belongs to the MIP/aquaporin (TC 1.A.8) family. TIP (TC 1.A.8.10) subfamily. In terms of tissue distribution, expressed in roots, leaves and anthers.

It is found in the vacuole membrane. In terms of biological role, aquaporins facilitate the transport of water and small neutral solutes across cell membranes. May be involved in transport from the vacuolar compartment to the cytoplasm. The chain is Probable aquaporin TIP4-1 (TIP4-1) from Oryza sativa subsp. japonica (Rice).